The sequence spans 250 residues: Short-chain dehydrogenase RED3 (250 aa).

The NADP(+) site is built by I16, S35, E63, and N91. Active-site proton donor residues include S145 and Y164. The NADP(+) site is built by Y164, K168, V195, and S197. Catalysis depends on K168, which acts as the Lowers pKa of active site Tyr.

This sequence belongs to the short-chain dehydrogenases/reductases (SDR) family.

The protein operates within polyketide biosynthesis. Its function is as follows. Short-chain dehydrogenase; part of the gene cluster that mediates the biosynthesis of pyriculol and pyriculariol, two heptaketides that induce lesion formation upon application on rice leaves but are dispensable for pathogenicity. The highly reducing polyketide synthase synthesizes the heptaketide backbone of pyriculol and pyriculariol. Pyriculol and pyriculariol contain several hydroxyl moieties and double bonds, so it can be assumed that several reduction steps occur during biosynthesis. These reactions could be executed by PKS19 itself or partly by the tailoring enzymes OXR1, OXR2, RED1, RED2 or RED3, identified within the cluster. The FAD-linked oxidoreductase OXR1 is the only tailoring enzyme for which the function has been determined yet, and is involved in the oxidation of dihydropyriculol and dihydropyriculariol into pyriculol and pyriculariol, respectively. The polypeptide is Short-chain dehydrogenase RED3 (Pyricularia oryzae (strain 70-15 / ATCC MYA-4617 / FGSC 8958) (Rice blast fungus)).